The primary structure comprises 207 residues: Protein GrpE (207 aa).

It belongs to the GrpE family. As to quaternary structure, homodimer.

It is found in the cytoplasm. In terms of biological role, participates actively in the response to hyperosmotic and heat shock by preventing the aggregation of stress-denatured proteins, in association with DnaK and GrpE. It is the nucleotide exchange factor for DnaK and may function as a thermosensor. Unfolded proteins bind initially to DnaJ; upon interaction with the DnaJ-bound protein, DnaK hydrolyzes its bound ATP, resulting in the formation of a stable complex. GrpE releases ADP from DnaK; ATP binding to DnaK triggers the release of the substrate protein, thus completing the reaction cycle. Several rounds of ATP-dependent interactions between DnaJ, DnaK and GrpE are required for fully efficient folding. In Pelodictyon phaeoclathratiforme (strain DSM 5477 / BU-1), this protein is Protein GrpE.